A 64-amino-acid chain; its full sequence is Large ribosomal subunit protein bL35 (64 aa).

The protein belongs to the bacterial ribosomal protein bL35 family.

The sequence is that of Large ribosomal subunit protein bL35 from Chlorobium limicola (strain DSM 245 / NBRC 103803 / 6330).